A 421-amino-acid polypeptide reads, in one-letter code: Zinc chaperone AztD (421 aa).

A signal peptide spans 1–29 (MMENIMKKRLLSTSISTLLLGLSVMPAFA). The Zn(2+) site is built by histidine 101, histidine 104, aspartate 106, histidine 126, histidine 169, histidine 216, and histidine 405. Residues cysteine 212 and cysteine 229 are joined by a disulfide bond. The disordered stretch occupies residues 399-421 (GGSGKVHGEHHDHEAHHHDDHAH). Over residues 404-421 (VHGEHHDHEAHHHDDHAH) the composition is skewed to basic and acidic residues. Residues 408 to 419 (HHDHEAHHHDDH) carry the N-terminal Zn(2+)-binding motif; binds a third Zn(2+) with low affinity motif.

In terms of assembly, monomer.

The protein localises to the periplasm. Acts as a zinc chaperone in the AztABCD zinc transport system. Directly transfers one zinc cation to the solute binding protein AztC; the transfer occurs without the formation of a stable interaction. Binds 3 Zn(2+), two with high affinity and one with low affinity, and transfers only Zn(2+) bound to site 2 to AztC. This chain is Zinc chaperone AztD, found in Citrobacter koseri (strain ATCC BAA-895 / CDC 4225-83 / SGSC4696).